Reading from the N-terminus, the 177-residue chain is Dihydrofolate reductase type 9 (177 aa).

One can recognise a DHFR domain in the interval 3–167; it reads SLNMIVAVNK…TKLIFQIWIN (165 aa).

It belongs to the dihydrofolate reductase family. In terms of assembly, homodimer.

The enzyme catalyses (6S)-5,6,7,8-tetrahydrofolate + NADP(+) = 7,8-dihydrofolate + NADPH + H(+). It participates in cofactor biosynthesis; tetrahydrofolate biosynthesis; 5,6,7,8-tetrahydrofolate from 7,8-dihydrofolate: step 1/1. Functionally, key enzyme in folate metabolism. Catalyzes an essential reaction for de novo glycine and purine synthesis, and for DNA precursor synthesis. In Escherichia coli, this protein is Dihydrofolate reductase type 9 (dhfrIX).